Consider the following 379-residue polypeptide: Beta sliding clamp (379 aa).

It belongs to the beta sliding clamp family. In terms of assembly, forms a ring-shaped head-to-tail homodimer around DNA which binds and tethers DNA polymerases and other proteins to the DNA. The DNA replisome complex has a single clamp-loading complex (3 tau and 1 each of delta, delta', psi and chi subunits) which binds 3 Pol III cores (1 core on the leading strand and 2 on the lagging strand) each with a beta sliding clamp dimer. Additional proteins in the replisome are other copies of gamma, psi and chi, Ssb, DNA helicase and RNA primase.

The protein localises to the cytoplasm. In terms of biological role, confers DNA tethering and processivity to DNA polymerases and other proteins. Acts as a clamp, forming a ring around DNA (a reaction catalyzed by the clamp-loading complex) which diffuses in an ATP-independent manner freely and bidirectionally along dsDNA. Initially characterized for its ability to contact the catalytic subunit of DNA polymerase III (Pol III), a complex, multichain enzyme responsible for most of the replicative synthesis in bacteria; Pol III exhibits 3'-5' exonuclease proofreading activity. The beta chain is required for initiation of replication as well as for processivity of DNA replication. This Rickettsia felis (strain ATCC VR-1525 / URRWXCal2) (Rickettsia azadi) protein is Beta sliding clamp (dnaN).